Consider the following 874-residue polypeptide: Alanine--tRNA ligase (874 aa).

The Zn(2+) site is built by histidine 562, histidine 566, cysteine 665, and histidine 669.

It belongs to the class-II aminoacyl-tRNA synthetase family. The cofactor is Zn(2+).

Its subcellular location is the cytoplasm. The enzyme catalyses tRNA(Ala) + L-alanine + ATP = L-alanyl-tRNA(Ala) + AMP + diphosphate. Functionally, catalyzes the attachment of alanine to tRNA(Ala) in a two-step reaction: alanine is first activated by ATP to form Ala-AMP and then transferred to the acceptor end of tRNA(Ala). Also edits incorrectly charged Ser-tRNA(Ala) and Gly-tRNA(Ala) via its editing domain. This chain is Alanine--tRNA ligase, found in Pseudomonas savastanoi pv. phaseolicola (strain 1448A / Race 6) (Pseudomonas syringae pv. phaseolicola (strain 1448A / Race 6)).